The primary structure comprises 83 residues: Kunitz-type serine protease inhibitor blackelin-2 (83 aa).

Positions 1–24 (MSSGGLLLLLGLLTLWEGLTPVSS) are cleaved as a signal peptide. In terms of domain architecture, BPTI/Kunitz inhibitor spans 31-81 (CELPDDRGPCRGIFHAFYYNPDQRQCLEFIYGGCYGNANNFKTIDECKRTC). Cystine bridges form between Cys31-Cys81, Cys40-Cys64, and Cys56-Cys77.

This sequence belongs to the venom Kunitz-type family. As to expression, expressed by the venom gland.

It localises to the secreted. Functionally, serine protease inhibitor. The polypeptide is Kunitz-type serine protease inhibitor blackelin-2 (Pseudechis porphyriacus (Red-bellied black snake)).